A 148-amino-acid chain; its full sequence is Large ribosomal subunit protein uL15 (148 aa).

Residues 1–61 are disordered; that stretch reads MKINDLKPAP…GGQMPLQRRV (61 aa).

This sequence belongs to the universal ribosomal protein uL15 family. In terms of assembly, part of the 50S ribosomal subunit.

Its function is as follows. Binds to the 23S rRNA. This Thermodesulfovibrio yellowstonii (strain ATCC 51303 / DSM 11347 / YP87) protein is Large ribosomal subunit protein uL15.